The sequence spans 446 residues: Telomere-binding protein 51 kDa subunit (446 aa).

The protein belongs to the telombin family. As to quaternary structure, monomer.

The protein resides in the nucleus. The protein localises to the chromosome. Its subcellular location is the telomere. Its function is as follows. May function as protective capping of the single-stranded telomeric overhang. May also participate in telomere length regulation during DNA replication. Binds specifically to the T4G4-containing extension on the 3'strand and protects this region of the telomere from nuclease digestion and chemical modification. This chain is Telomere-binding protein 51 kDa subunit, found in Euplotes crassus.